Reading from the N-terminus, the 158-residue chain is Large ribosomal subunit protein uL22 (158 aa).

The protein belongs to the universal ribosomal protein uL22 family. Part of the 50S ribosomal subunit.

This protein binds specifically to 23S rRNA. It makes multiple contacts with different domains of the 23S rRNA in the assembled 50S subunit and ribosome. Functionally, the globular domain of the protein is located near the polypeptide exit tunnel on the outside of the subunit, while an extended beta-hairpin is found that lines the wall of the exit tunnel in the center of the 70S ribosome. The polypeptide is Large ribosomal subunit protein uL22 (Haloquadratum walsbyi (strain DSM 16790 / HBSQ001)).